A 357-amino-acid chain; its full sequence is Dual-specificity RNA methyltransferase RlmN (357 aa).

Catalysis depends on E89, which acts as the Proton acceptor. In terms of domain architecture, Radical SAM core spans 109–340; that stretch reads EGEKYTVCVS…CTIRESKALD (232 aa). An intrachain disulfide couples C116 to C345. [4Fe-4S] cluster-binding residues include C123, C127, and C130. S-adenosyl-L-methionine contacts are provided by residues 173-174, S203, 226-228, and N302; these read GE and SLH. C345 (S-methylcysteine intermediate) is an active-site residue.

Belongs to the radical SAM superfamily. RlmN family. It depends on [4Fe-4S] cluster as a cofactor.

It is found in the cytoplasm. It catalyses the reaction adenosine(2503) in 23S rRNA + 2 reduced [2Fe-2S]-[ferredoxin] + 2 S-adenosyl-L-methionine = 2-methyladenosine(2503) in 23S rRNA + 5'-deoxyadenosine + L-methionine + 2 oxidized [2Fe-2S]-[ferredoxin] + S-adenosyl-L-homocysteine. The enzyme catalyses adenosine(37) in tRNA + 2 reduced [2Fe-2S]-[ferredoxin] + 2 S-adenosyl-L-methionine = 2-methyladenosine(37) in tRNA + 5'-deoxyadenosine + L-methionine + 2 oxidized [2Fe-2S]-[ferredoxin] + S-adenosyl-L-homocysteine. Specifically methylates position 2 of adenine 2503 in 23S rRNA and position 2 of adenine 37 in tRNAs. m2A2503 modification seems to play a crucial role in the proofreading step occurring at the peptidyl transferase center and thus would serve to optimize ribosomal fidelity. This chain is Dual-specificity RNA methyltransferase RlmN, found in Helicobacter pylori (strain G27).